The following is a 175-amino-acid chain: NADH dehydrogenase [ubiquinone] 1 alpha subcomplex assembly factor 4 (175 aa).

G2 carries N-myristoyl glycine lipidation. A Phosphoserine modification is found at S35.

Belongs to the NDUFAF4 family. In terms of assembly, binds calmodulin. Interacts with NDUFAF3. (Microbial infection) Interacts with the vesicular stomatitis virus matrix protein/M; the interaction inhibits viral propagation. In terms of processing, phosphorylated on serine. Prolactin stimulate serine phosphorylation.

It localises to the mitochondrion. Its subcellular location is the membrane. Its function is as follows. Involved in the assembly of mitochondrial NADH:ubiquinone oxidoreductase complex (complex I). May be involved in cell proliferation and survival of hormone-dependent tumor cells. May be a regulator of breast tumor cell invasion. This chain is NADH dehydrogenase [ubiquinone] 1 alpha subcomplex assembly factor 4, found in Homo sapiens (Human).